Consider the following 459-residue polypeptide: UDP-N-acetylmuramate--L-alanine ligase (459 aa).

118 to 124 contacts ATP; the sequence is GTHGKTT.

It belongs to the MurCDEF family.

The protein localises to the cytoplasm. It carries out the reaction UDP-N-acetyl-alpha-D-muramate + L-alanine + ATP = UDP-N-acetyl-alpha-D-muramoyl-L-alanine + ADP + phosphate + H(+). It participates in cell wall biogenesis; peptidoglycan biosynthesis. In terms of biological role, cell wall formation. The protein is UDP-N-acetylmuramate--L-alanine ligase of Lachnospira eligens (strain ATCC 27750 / DSM 3376 / VPI C15-48 / C15-B4) (Eubacterium eligens).